The following is a 368-amino-acid chain: NAD(P)H-quinone oxidoreductase subunit 1, chloroplastic (368 aa).

The next 6 helical transmembrane spans lie at 27–47, 97–117, 130–150, 269–289, 308–328, and 348–368; these read FIWIAFSILILLLTITIGVLV, WLFNIGPAIVVIPVFLSYLVI, IGVFFWIAISSIVPLGLLMAG, SSLFVTILYLGGWHFSIPFLL, IIIGIIIVLIKSYLFSFIAIM, and FLLPIALGNLLLTASFQAFLL.

Belongs to the complex I subunit 1 family. As to quaternary structure, NDH is composed of at least 16 different subunits, 5 of which are encoded in the nucleus.

It localises to the plastid. Its subcellular location is the chloroplast thylakoid membrane. The catalysed reaction is a plastoquinone + NADH + (n+1) H(+)(in) = a plastoquinol + NAD(+) + n H(+)(out). It carries out the reaction a plastoquinone + NADPH + (n+1) H(+)(in) = a plastoquinol + NADP(+) + n H(+)(out). Functionally, NDH shuttles electrons from NAD(P)H:plastoquinone, via FMN and iron-sulfur (Fe-S) centers, to quinones in the photosynthetic chain and possibly in a chloroplast respiratory chain. The immediate electron acceptor for the enzyme in this species is believed to be plastoquinone. Couples the redox reaction to proton translocation, and thus conserves the redox energy in a proton gradient. The polypeptide is NAD(P)H-quinone oxidoreductase subunit 1, chloroplastic (Physcomitrium patens (Spreading-leaved earth moss)).